The chain runs to 2424 residues: Voltage-dependent P/Q-type calcium channel subunit alpha-1A (2424 aa).

Over 1 to 98 (MARFGDEMPA…KYAKKITEWP (98 aa)) the chain is Cytoplasmic. An I repeat occupies 85 to 363 (NVVRKYAKKI…LVLGVLSGEF (279 aa)). A helical transmembrane segment spans residues 99 to 117 (PFEYMILATIIANCIVLAL). At 118–135 (EQHLPDDDKTPMSERLDD) the chain is on the extracellular side. The chain crosses the membrane as a helical span at residues 136-155 (TEPYFIGIFCFEAGIKIIAL). The Cytoplasmic portion of the chain corresponds to 156–167 (GFAFHKGSYLRN). A helical transmembrane segment spans residues 168–185 (GWNVMDFVVVLTGILATV). Residues 186 to 190 (GTEFD) are Extracellular-facing. The chain crosses the membrane as a helical span at residues 191-209 (LRTLRAVRVLRPLKLVSGI). The Cytoplasmic portion of the chain corresponds to 210–228 (PSLQVVLKSIMKAMIPLLQ). The helical transmembrane segment at 229–248 (IGLLLFFAILIFAIIGLEFY) threads the bilayer. Over 249–335 (MGKFHTTCFE…NSNDASGNTW (87 aa)) the chain is Extracellular. The N-linked (GlcNAc...) asparagine glycan is linked to Asn283. Glu318 provides a ligand contact to Ca(2+). Residues 336–360 (NWLYFIPLIIIGSFFMLNLVLGVLS) traverse the membrane as a helical segment. Residues 361–487 (GEFAKERERV…FYIRRMVKTQ (127 aa)) are Cytoplasmic-facing. The interval 383–400 (QQIERELNGYMEWISKAE) is binding to the beta subunit. Residue Thr409 is modified to Phosphothreonine. Ser448 and Ser451 each carry phosphoserine. Residues 473–717 (ERRMRFYIRR…VFLAIAVDNL (245 aa)) form an II repeat. A helical membrane pass occupies residues 488–506 (AFYWTVLSLVALNTLCVAI). Residues 507–521 (VHYNQPEWLSDFLYY) are Extracellular-facing. The chain crosses the membrane as a helical span at residues 522–541 (AEFIFLGLFMSEMFIKMYGL). The Cytoplasmic segment spans residues 542-549 (GTRPYFHS). Residues 550-568 (SFNCFDCGVIIGSIFEVIW) form a helical membrane-spanning segment. Residues 569 to 578 (AVIKPGTSFG) lie on the Extracellular side of the membrane. Residues 579-597 (ISVLRALRLLRIFKVTKYW) traverse the membrane as a helical segment. The Cytoplasmic portion of the chain corresponds to 598 to 616 (ASLRNLVVSLLNSMKSIIS). The helical transmembrane segment at 617–636 (LLFLLFLFIVVFALLGMQLF) threads the bilayer. Over 637-689 (GGQFNFDEGTPPTNFDTFPAAIMTVFQILTGEDWNEVMYDGIKSQGGVQGGMV) the chain is Extracellular. Glu668 provides a ligand contact to Ca(2+). Residues 690–714 (FSIYFIVLTLFGNYTLLNVFLAIAV) form a helical membrane-spanning segment. Residues 715 to 1253 (DNLANAQELT…RLCHYILNLR (539 aa)) lie on the Cytoplasmic side of the membrane. Ser750, Ser753, and Ser790 each carry phosphoserine. The interval 819–1229 (HLDRPLVVDP…GEDGPKPMPP (411 aa)) is disordered. Composition is skewed to basic and acidic residues over residues 893 to 912 (ELSR…REGG), 922 to 931 (EAERGKAGDP), and 969 to 996 (RPGE…RSGE). The span at 1053-1065 (PNLSTTRPIQQDL) shows a compositional bias: polar residues. Ser1091 and Ser1104 each carry phosphoserine. Residues 1110–1140 (SSTDPAGPTPATAANPQNSTASRRTPNNPGN) show a composition bias toward low complexity. Polar residues predominate over residues 1151–1168 (ENSLIVTNPSTAQTNSAK). The span at 1204–1214 (LPKKEDEKKEE) shows a compositional bias: basic and acidic residues. One copy of the III repeat lies at 1240–1523 (NPLRRLCHYI…IFVALIIITF (284 aa)). A helical membrane pass occupies residues 1254–1272 (YFEMCILMVIAMSSIALAA). Residues 1273-1288 (EDPVQPNAPRNNVLRY) lie on the Extracellular side of the membrane. A helical transmembrane segment spans residues 1289 to 1308 (FDYVFTGVFTFEMVIKMIDL). At 1309 to 1320 (GLVLHQGAYFRD) the chain is on the cytoplasmic side. Residues 1321–1339 (LWNILDFIVVSGALVAFAF) traverse the membrane as a helical segment. Residues 1340–1350 (TGNSKGKDINT) lie on the Extracellular side of the membrane. Residues 1351-1369 (IKSLRVLRVLRPLKTIKRL) traverse the membrane as a helical segment. The Cytoplasmic portion of the chain corresponds to 1370–1388 (PKLKAVFDCVVNSLKNVFN). The helical transmembrane segment at 1389 to 1408 (ILIVYMLFMFIFAVVAVQLF) threads the bilayer. Over 1409–1495 (KGKFFHCTDE…QGPSPGYRME (87 aa)) the chain is Extracellular. Glu1469 provides a ligand contact to Ca(2+). Residues 1496-1520 (MSIFYVVYFVVFPFFFVNIFVALII) form a helical membrane-spanning segment. Over 1521–1575 (ITFQEQGDKMMEEYSLEKNERACIDFAISAKPLTRHMPQNKQSFQYRMWQFVVSP) the chain is Cytoplasmic. The IV repeat unit spans residues 1560–1823 (NKQSFQYRMW…LFVAVIMDNF (264 aa)). A helical transmembrane segment spans residues 1576 to 1604 (PFEYTIMAMIALNTIVLMMKFYGASVAYD). The Extracellular segment spans residues 1605 to 1609 (NALKV). Residues 1610-1629 (FNIVFTSLFSLECLLKVLAF) traverse the membrane as a helical segment. Residues 1630–1637 (GILNYFRD) lie on the Cytoplasmic side of the membrane. Residues 1638 to 1656 (AWNIFDFVTVLGSITDILV) form a helical membrane-spanning segment. The Extracellular segment spans residues 1657 to 1665 (TEFGNNFIN). N-linked (GlcNAc...) asparagine glycosylation occurs at Asn1665. A helical membrane pass occupies residues 1666–1684 (LSFLRLFRAARLIKLLRQG). Topologically, residues 1685-1703 (YTIRILLWTFVQSFKALPY) are cytoplasmic. The chain crosses the membrane as a helical span at residues 1704–1723 (VCLLIAMLFFIYAIIGMQVF). Over 1724–1795 (GNIGIDMEDE…ILTPECGNEF (72 aa)) the chain is Extracellular. The chain crosses the membrane as a helical span at residues 1796 to 1820 (AYFYFVSFIFLCSFLMLNLFVAVIM). The Cytoplasmic segment spans residues 1821–2424 (DNFEYLTRDS…GGPRASAPSP (604 aa)). Thr1993 carries the phosphothreonine modification. A disordered region spans residues 1997 to 2424 (FQRMEPPPDE…GGPRASAPSP (428 aa)). A compositionally biased stretch (polar residues) spans 2037-2053 (SWVTQRAQEMFQKTGTW). Phosphoserine occurs at positions 2054, 2072, 2084, 2086, 2127, and 2148. Residues 2074-2090 (EMREMSQDGYSDSEHCL) show a composition bias toward basic and acidic residues. Composition is skewed to basic and acidic residues over residues 2142–2159 (RRLD…ENQR) and 2200–2210 (PSREREQERGR). Residues 2211–2229 (PKDRKHRPHHHHHHHHHPG) show a composition bias toward basic residues. The segment covering 2249 to 2262 (VARVRPARAPALAH) has biased composition (low complexity). Basic residues predominate over residues 2280-2305 (RRARRPRPRQRRRPRRRRGGGGRALR).

The protein belongs to the calcium channel alpha-1 subunit (TC 1.A.1.11) family. CACNA1A subfamily. Voltage-dependent calcium channels are multisubunit complexes, consisting of alpha-1, alpha-2, beta and delta subunits in a 1:1:1:1 ratio. The channel activity is directed by the pore-forming and voltage-sensitive alpha-1 subunit. In many cases, this subunit is sufficient to generate voltage-sensitive calcium channel activity. The auxiliary subunits beta and alpha-2/delta linked by a disulfide bridge regulate the channel activity. Interacts with CABP1. Interacts with the spider omega-agatoxin-IVA (AC P30288). Interacts with TSPOAP1. In terms of tissue distribution, brain specific. Purkinje cells contain predominantly P-type VSCC, the Q-type being a prominent calcium current in cerebellar granule cells.

The protein localises to the cell membrane. The enzyme catalyses Ca(2+)(in) = Ca(2+)(out). Functionally, voltage-sensitive calcium channels (VSCC) mediate the entry of calcium ions into excitable cells and are also involved in a variety of calcium-dependent processes, including muscle contraction, hormone or neurotransmitter release, gene expression, cell motility, cell division and cell death. The isoform alpha-1A gives rise to P and/or Q-type calcium currents. P/Q-type calcium channels belong to the 'high-voltage activated' (HVA) group and are specifically blocked by the spider omega-agatoxin-IVA (AC P54282). They are however insensitive to dihydropyridines (DHP). This is Voltage-dependent P/Q-type calcium channel subunit alpha-1A (CACNA1A) from Oryctolagus cuniculus (Rabbit).